We begin with the raw amino-acid sequence, 168 residues long: Crossover junction endodeoxyribonuclease RuvC (168 aa).

Active-site residues include Asp-9, Glu-70, and Asp-145. 3 residues coordinate Mg(2+): Asp-9, Glu-70, and Asp-145.

This sequence belongs to the RuvC family. In terms of assembly, homodimer which binds Holliday junction (HJ) DNA. The HJ becomes 2-fold symmetrical on binding to RuvC with unstacked arms; it has a different conformation from HJ DNA in complex with RuvA. In the full resolvosome a probable DNA-RuvA(4)-RuvB(12)-RuvC(2) complex forms which resolves the HJ. It depends on Mg(2+) as a cofactor.

It localises to the cytoplasm. It catalyses the reaction Endonucleolytic cleavage at a junction such as a reciprocal single-stranded crossover between two homologous DNA duplexes (Holliday junction).. The RuvA-RuvB-RuvC complex processes Holliday junction (HJ) DNA during genetic recombination and DNA repair. Endonuclease that resolves HJ intermediates. Cleaves cruciform DNA by making single-stranded nicks across the HJ at symmetrical positions within the homologous arms, yielding a 5'-phosphate and a 3'-hydroxyl group; requires a central core of homology in the junction. The consensus cleavage sequence is 5'-(A/T)TT(C/G)-3'. Cleavage occurs on the 3'-side of the TT dinucleotide at the point of strand exchange. HJ branch migration catalyzed by RuvA-RuvB allows RuvC to scan DNA until it finds its consensus sequence, where it cleaves and resolves the cruciform DNA. This chain is Crossover junction endodeoxyribonuclease RuvC, found in Chlamydia pneumoniae (Chlamydophila pneumoniae).